The chain runs to 392 residues: 23S rRNA (uracil(747)-C(5))-methyltransferase RlmC (392 aa).

[4Fe-4S] cluster contacts are provided by C4, C12, C15, and C93. Residues Q218, F247, E275, and N321 each contribute to the S-adenosyl-L-methionine site. The active-site Nucleophile is the C348.

This sequence belongs to the class I-like SAM-binding methyltransferase superfamily. RNA M5U methyltransferase family. RlmC subfamily.

The catalysed reaction is uridine(747) in 23S rRNA + S-adenosyl-L-methionine = 5-methyluridine(747) in 23S rRNA + S-adenosyl-L-homocysteine + H(+). Its function is as follows. Catalyzes the formation of 5-methyl-uridine at position 747 (m5U747) in 23S rRNA. The chain is 23S rRNA (uracil(747)-C(5))-methyltransferase RlmC from Haemophilus influenzae (strain 86-028NP).